We begin with the raw amino-acid sequence, 1412 residues long: Ecdysone-induced protein 75B, isoform B (1412 aa).

Residues 1–14 (MEAVQAAAAATSSG) show a composition bias toward low complexity. 4 disordered regions span residues 1–96 (MEAV…PGGT), 110–204 (QRAT…QQHV), 258–298 (QYQQ…VPPP), and 321–448 (HFQQ…SIPD). The span at 15–25 (GSSGSVPGSGS) shows a compositional bias: gly residues. The span at 32-57 (IKTEPIDFEMLHLEENERQQDIEREP) shows a compositional bias: basic and acidic residues. Over residues 58–68 (SSSNSNSNSNS) the composition is skewed to low complexity. Polar residues predominate over residues 69-81 (LTPQRYTHVQVQT). Residues 87–96 (PTGLTTPGGT) are compositionally biased toward low complexity. The segment covering 124 to 133 (YSQQQGTAAS) has biased composition (polar residues). The segment covering 135–150 (SAPPETTALLTTTSGT) has biased composition (low complexity). Residues 151–164 (PQIIITRTLPSNQH) show a composition bias toward polar residues. Low complexity predominate over residues 177–203 (HHYQQQQPQRQQSPPPLHHQQQQQQQH). Residues 266–284 (PLAPPPPPPPPPPPPPPPQ) show a composition bias toward pro residues. Composition is skewed to low complexity over residues 323 to 371 (QQQQ…SSHI), 378 to 403 (SSSS…NSVM), and 417 to 447 (ASSS…SSIP). The segment at residues 455 to 531 (TVLCRVCGDK…VGMSRDAVRF (77 aa)) is a DNA-binding region (nuclear receptor). 2 NR C4-type zinc fingers span residues 458–478 (CRVC…CEGC) and 495–514 (CTKN…CQYC). The region spanning 565–813 (DQPRLLAAVL…QQMWSMEDGN (249 aa)) is the NR LBD domain. Disordered stretches follow at residues 837 to 878 (KSPL…SALA), 984 to 1021 (LDSP…SVDD), 1044 to 1064 (VSVS…KRQI), 1108 to 1174 (AEAD…SSHS), 1204 to 1317 (ENST…SNSA), and 1368 to 1401 (VTVT…NPGL). Composition is skewed to low complexity over residues 854-866 (GSPS…GVSL), 1005-1017 (SSGG…SPRS), 1044-1058 (VSVS…STSS), 1110-1155 (ADAS…AQSQ), and 1163-1174 (SSPKASMASSHS). Polar residues-rich tracts occupy residues 1206–1219 (STAA…VGNR) and 1231–1253 (AVQN…QRQQ). Low complexity-rich tracts occupy residues 1254 to 1290 (SVSP…SASS), 1299 to 1317 (STSN…SNSA), and 1372 to 1400 (ASNG…PNPG).

This sequence belongs to the nuclear hormone receptor family. NR1 subfamily.

It is found in the nucleus. Implicated in the regulation of ecdysone-triggered gene hierarchies. Probably plays a key role in mediating the regulation of the larval molt by 20-OH-ecdysone. This chain is Ecdysone-induced protein 75B, isoform B (Eip75B), found in Drosophila melanogaster (Fruit fly).